The chain runs to 303 residues: Probable 5-dehydro-4-deoxyglucarate dehydratase (303 aa).

It belongs to the DapA family.

The catalysed reaction is 5-dehydro-4-deoxy-D-glucarate + H(+) = 2,5-dioxopentanoate + CO2 + H2O. It participates in carbohydrate acid metabolism; D-glucarate degradation; 2,5-dioxopentanoate from D-glucarate: step 2/2. This is Probable 5-dehydro-4-deoxyglucarate dehydratase from Variovorax paradoxus (strain S110).